The chain runs to 132 residues: Phosphoribosyl-AMP cyclohydrolase (132 aa).

Aspartate 82 provides a ligand contact to Mg(2+). Cysteine 83 is a binding site for Zn(2+). Residues aspartate 84 and aspartate 86 each coordinate Mg(2+). Residues cysteine 99 and cysteine 106 each coordinate Zn(2+).

The protein belongs to the PRA-CH family. As to quaternary structure, homodimer. Mg(2+) is required as a cofactor. Requires Zn(2+) as cofactor.

Its subcellular location is the cytoplasm. The enzyme catalyses 1-(5-phospho-beta-D-ribosyl)-5'-AMP + H2O = 1-(5-phospho-beta-D-ribosyl)-5-[(5-phospho-beta-D-ribosylamino)methylideneamino]imidazole-4-carboxamide. Its pathway is amino-acid biosynthesis; L-histidine biosynthesis; L-histidine from 5-phospho-alpha-D-ribose 1-diphosphate: step 3/9. Its function is as follows. Catalyzes the hydrolysis of the adenine ring of phosphoribosyl-AMP. The polypeptide is Phosphoribosyl-AMP cyclohydrolase (Paramagnetospirillum magneticum (strain ATCC 700264 / AMB-1) (Magnetospirillum magneticum)).